Consider the following 248-residue polypeptide: Mannose-binding protein C (248 aa).

The N-terminal stretch at M1 to S20 is a signal peptide. One can recognise a Collagen-like domain in the interval G42–E99. The interval I43–K113 is disordered. The residue at position 47 (P47) is a 4-hydroxyproline. A compositionally biased stretch (basic and acidic residues) spans K49 to E61. P73, P79, P82, and P88 each carry 4-hydroxyproline. Positions P82–K91 are enriched in low complexity. Positions R112 to L130 form a coiled coil. Residues V134–E245 form the C-type lectin domain. 2 disulfide bridges follow: C155/C244 and C222/C236.

As to quaternary structure, oligomeric complex of 3 or more homotrimers. Interacts with MASP1 and MASP2. Interacts with MEP1A and MEP1B and may inhibit their catalytic activity. Hydroxylation on proline residues within the sequence motif, GXPG, is most likely to be 4-hydroxy as this fits the requirement for 4-hydroxylation in vertebrates.

It localises to the secreted. Its function is as follows. Calcium-dependent lectin involved in innate immune defense. Binds mannose, fucose and N-acetylglucosamine on different microorganisms and activates the lectin complement pathway. Binds to late apoptotic cells, as well as to apoptotic blebs and to necrotic cells, but not to early apoptotic cells, facilitating their uptake by macrophages. The polypeptide is Mannose-binding protein C (MBL2) (Chlorocebus aethiops (Green monkey)).